A 2336-amino-acid chain; its full sequence is MGWICPNVSCLGHTSVLSNKEISREGRCERAMCGSLLVKVAVPQQPAKKKKQATPAPRPTYPPCVVEKTAATPVTVEKVFVEVIPTVPSCLAPKWMLGIQRVEGAPSKAPKQAVPKWVWQMRQLLKAALTGANSFGPRYVRAHFSRARISWIYAQLCEGCPLPLWNRGRALKKSSLALLARIEDTKQQKRAAWEKKEAAPLKSKREYEQKRALLIPLIEKLRARLLQDEARELREQLFPSGNGGTDTTKVAAASKAEIKAAAQLKAYQDVCAKVWRVKRQEKKAQQAKLVEDLITSANCGKQDVSEPAIEKAARPKRRIEIGDFVPQKTLWGLYPCVGLGANMADPVCRVLSACVSIAGKRPDLVSTIYAFITGEAQVWLSAPRVCMLAKRIIELSDWYPHELLAEELKKISDEENCKEAEREINLKYLEISKATENMRANGLFNKLKGKAQDLWSGIVDFASHPFRKYLATAAEFVEGFSHRVVDAVMSRVNAAIAQFAAQLDIAKTLVDQLVIHVKRWYTSLCTSFDDSLKLLGKWAGYALGLIVGVGVCHLVEVICAHMGLPLGGVITGVFTTAYMGWLFVKTPVGSELVMNLRMQVARIARNIFDVQRTGIPPDLPANPNVGFSVPYEAFGGIDNQPFSMGADVPNARAIPVVSPIINAMAGFGASMLSMKAMGLIEMGKLGAACHSLRMGKDALCEFVSTVLYYFGRLADKVTGRETEFFDELSILVQIDVKDWITRSRGVLLDSCYTSLNNMICSDVVNKLVTDGEQIASNIAGTPRRLSLDFGQLVSSIMKDLLDLQQRIVRHGVTVGRRKEPTWIYIFGPSHCGKSNMMDHLTSEVCRYFDLPYTYIARNGQDNFFTTGYKRQTVLQIDDLSCVENVPPIERELINLVSCSEYPLKMADLSDKSISFQSPFIISTSNQRTCLPTCGITHCEAFNNRRAVVVEMRRKPGVVFDPMDCHAAMQGRFLDKRDHTPLFGVQGQPETFWKDVPEMTTILLNICVAHRQEQDILQEQHIRKHAVNDPLILASERFLKQESRKALCYMPRVEMEICGVQSQAAGCYYLCVDQKLYTCEDDGNLVETPCLNPSYAQWERNSSENFVGGVQALDALECRSILVSGILRNLVQGQCCVLSIDEMSRLPLCTQRLFKALQLQERVYLRLIQKKISHILSVDESNVYSKNAWMRCLEFAAASRDYLKEHGLEVLLLLAAMMILCVALYYFVGAFIGVMGGALSMGAAMAGLKEVDMKAQYSSGAQEGRYRSRNIPIRQRYRYARGELDEEVPLGGQLAVALYGSQGRFISALQYKGKSVMLTRHQMLMFAEKERVTCIYLATGESVVLTFNRDDVQEFPNHETCMWQAAGMLQLPAKFKDCFLEKGETELAPAFELEGYVLRPDSTAFIMTILKTWARVQYEPFVVRGSLAKEKYVNELPTSIWFQYQSRNNDCGMVCLAQVGGKKKIVGLLVAGVDQQTWADNLPNPCMAEMKSQIEYEFKLGAHTEGYTKLGYLTKDKTPHLPKKNNAVLVKPEYRIDSPVPIKEPSIISAEDPRCPKDAEGKPIDPIVKAFEKKFTTPMDLLEDDILESIAQEMVDEWQDCESEPLCDVPLEVAINGIPGTQIDDDDEFEDAVECLKMRTSPGYPYVLHKEPGMKGKEAYFELAPDGTRALKEGSLAAELYENIVQYSKSAIPELVVIECPKDELLKTEKVNKACRPFEIMPLHYNLFLREKTLAFSLFQQRNRHKLACQVGTKAYSHDWTHMYQRLVAKSDRAINCDYSSFDGLLNSQVVSCIANMINSMYHSPEETVVSKRQRYNMINALFGRLAITGQEVMRVRAGLPSGFALTVVINSVFNEILMRYCFKVLVLGPQRNSFSTYVTLLVYGDDNLMSCTDKIAIYFNGETIKETLKKKNVTITDGSDKTAPDIKWKTLGELDFLKRRFLKLETGVVQAPLDLTAIFSCLHWVTPHPQKMPKGGAQLQVENVDTLYELALNVQVALTELYLHGNKEEFQRVRNFYTKKMNILPAGYYTWADREAFHMSKQTGMEAYQPAKEIDLDVGQEFARFMHTSDIGNQVHFTRQCLVVAGPFYKPTPDQLLVSTTPLKQGESGYWVPVETGMGIGNLPTIAWVHRFMRPTQLVDAYGYKIWGNVRSHIESGKSLVFRSEAPYVAGNAALMAFGQAAKLLEIKTALNLYRNVIPESTYGLEQYFDAAIPQASLPGTFYLANAESESLLQEHKTGTVIGLTTEKFNLNGARDLIMQGQKLGKLPVMAATQAPNKFYVGLCCQKNFCPGHATSSDSIAKAFSQCWAMRCAPNSSSRKVTFEPEWRKNKFLGIS.

Residues 599 to 1210 (QVARIARNIF…YLKEHGLEVL (612 aa)) lie on the Cytoplasmic side of the membrane. Positions 797 to 964 (MKDLLDLQQR…PGVVFDPMDC (168 aa)) constitute an SF3 helicase domain. 827-834 (GPSHCGKS) is an ATP binding site. The chain crosses the membrane as a helical span at residues 1211-1231 (LLLAAMMILCVALYYFVGAFI). At 1232 to 1253 (GVMGGALSMGAAMAGLKEVDMK) the chain is on the lumenal side. Residues 1278 to 1486 (YARGELDEEV…WADNLPNPCM (209 aa)) enclose the Peptidase C3 domain. Catalysis depends on for picornain 3C-like protease activity residues histidine 1320, glutamate 1358, and cysteine 1450. The region spanning 1771-1899 (DRAINCDYSS…SCTDKIAIYF (129 aa)) is the RdRp catalytic domain.

This sequence belongs to the nepoviruses RNA1 polyprotein family. Specific enzymatic cleavages by picornain 3C-like protease in vivo yield mature proteins. Picornain 3C-like protease is autocatalytically processed. Post-translationally, VPg is uridylylated by the polymerase and is covalently linked to the 5'-end of genomic RNA. This uridylylated form acts as a nucleotide-peptide primer for the polymerase.

It localises to the host endoplasmic reticulum lumen. Its subcellular location is the host endoplasmic reticulum membrane. It catalyses the reaction RNA(n) + a ribonucleoside 5'-triphosphate = RNA(n+1) + diphosphate. Its function is as follows. Picornain 3C-like protease is a thiol protease that cleaves the P1 and P2 polyproteins. The sequence is that of RNA1 polyprotein from Cycas necrotic stunt virus (CNSV).